Here is a 231-residue protein sequence, read N- to C-terminus: mRNA-decapping enzyme subunit 1 (231 aa).

The interval 92–120 (QNGSNNIQVNNGSDNSNRNSSGNGNSYKS) is disordered. Residues 101–120 (NNGSDNSNRNSSGNGNSYKS) are compositionally biased toward low complexity.

This sequence belongs to the DCP1 family. Component of the decapping complex composed of DCP1 and DCP2. Interacts with mRNAs, DHH1, LSM1, LSM2, LSM3, LSM4, LSM5, LSM6, LSM7, and the cap-binding proteins PAB1 and TIF4632/eIF-4G. Phosphorylated.

It is found in the cytoplasm. Its subcellular location is the P-body. Its function is as follows. Component of the decapping complex necessary for the degradation of mRNAs, both in normal mRNA turnover and in nonsense-mediated mRNA decay. Removes the 7-methyl guanine cap structure from mRNA molecules, yielding a 5'-phosphorylated mRNA fragment and 7m-GDP. Decapping is the major pathway of mRNA degradation in yeast. It occurs through deadenylation, decapping and subsequent 5' to 3' exonucleolytic decay of the transcript body. DCP1 is activated by the DEAD-box helicase DHH1 and destabilizes the eIF-4F cap-binding complex from the mRNA. The polypeptide is mRNA-decapping enzyme subunit 1 (DCP1) (Saccharomyces cerevisiae (strain ATCC 204508 / S288c) (Baker's yeast)).